Here is a 358-residue protein sequence, read N- to C-terminus: Heme A synthase (358 aa).

Transmembrane regions (helical) follow at residues 22–42 (IQVWLYTILLLCFAIVLVGGA), 107–127 (VLGRFVGLVALLGLVLFWVTK), 133–153 (IFLQLLTVPILIAMQGIIGWW), 172–192 (LAIHLIAACLVIIFVTYLSRG), 208–228 (FAGWLVFLILVEIYFGALVAG), 269–289 (FVHRCFSYFLFITAVIHALYV), 302–322 (AIFLCIMIVMQAFLGIITLLH), and 324–344 (VPISLGLIHQGGALVVLCFSV). Histidine 271 contributes to the heme binding site. Histidine 332 contacts heme.

Belongs to the COX15/CtaA family. Type 2 subfamily. Interacts with CtaB. Heme b serves as cofactor.

It is found in the cell membrane. The enzyme catalyses Fe(II)-heme o + 2 A + H2O = Fe(II)-heme a + 2 AH2. The protein operates within porphyrin-containing compound metabolism; heme A biosynthesis; heme A from heme O: step 1/1. Functionally, catalyzes the conversion of heme O to heme A by two successive hydroxylations of the methyl group at C8. The first hydroxylation forms heme I, the second hydroxylation results in an unstable dihydroxymethyl group, which spontaneously dehydrates, resulting in the formyl group of heme A. The sequence is that of Heme A synthase from Bartonella bacilliformis (strain ATCC 35685 / KC583 / Herrer 020/F12,63).